The chain runs to 536 residues: Uridine 5'-monophosphate transferase (536 aa).

Residues 22 to 84 (ADHPTHTPED…GLQQCSSSPS (63 aa)) form a disordered region. Residues 31–45 (DSPQTVPSPRSSSAH) are compositionally biased toward polar residues. Positions 48 to 60 (EIQELRSLQETRP) are enriched in basic and acidic residues. The segment covering 66–84 (RSQSRSSKHGLQQCSSSPS) has biased composition (polar residues). LRR repeat units follow at residues 140-164 (AGQA…LHRL), 165-189 (AHLR…SLCK), 191-211 (LERI…IGAL), 212-234 (KNLS…IGQC), 236-257 (SLTT…LANL), and 258-282 (TQLK…NLDD). A Fido domain is found at 377-533 (ITLDRIFKLN…LEGIATVMNQ (157 aa)).

In the C-terminal section; belongs to the fic family. Interacts with several members of the Arabidopsis RLCK VIIa subfamily.

The protein resides in the secreted. Its subcellular location is the host cell. The protein localises to the host cell membrane. It carries out the reaction L-seryl-[protein] + UTP = O-(5'-uridylyl)-L-seryl-[protein] + diphosphate. It catalyses the reaction L-threonyl-[protein] + UTP = uridylyl-L-threonyl-[protein] + diphosphate. Functions both as a virulence and an avirulence gene in Arabidopsis. Causes disease on the Kashmir (Kas) ecotype, but not on Columbia (Col-0) ecotype. Acts by directly uridylylating the conserved phosphorylation sites in the activation loop of a number of host receptor-like cytoplasmic protein kinases (RLCK), including BIK1, RIPK, PBL1 and PBL2, preventing the activation of these kinases and subsequent signal transduction. In susceptible Arabidopsis plants, uridylylation of BIK1 inhibits the PAMP-triggered immunity (PTI) signaling cascade and thereby promotes bacterial virulence. It also inhibits RPM1-dependent effector-triggered immunity (ETI) in mesophyll tissues by targeting RIPK. In contrast, in the resistant ecotype Col-0, xopAC is a major avirulence gene. Uridylylation of PBL2 triggers the PBL2-RKS1 interaction and thus the assembly of the PBL2-RKS1-ZAR1 complex, which, in turn, activates effector-triggered immunity (ETI) against X.campestris. The chain is Uridine 5'-monophosphate transferase from Xanthomonas campestris pv. campestris (strain 8004).